The primary structure comprises 424 residues: Serine--tRNA ligase (424 aa).

229–231 (TAE) contacts L-serine. 260 to 262 (RSE) lines the ATP pocket. Residue E283 coordinates L-serine. ATP is bound at residue 347 to 350 (EISS). S383 contacts L-serine.

This sequence belongs to the class-II aminoacyl-tRNA synthetase family. Type-1 seryl-tRNA synthetase subfamily. As to quaternary structure, homodimer. The tRNA molecule binds across the dimer.

The protein localises to the cytoplasm. The catalysed reaction is tRNA(Ser) + L-serine + ATP = L-seryl-tRNA(Ser) + AMP + diphosphate + H(+). It catalyses the reaction tRNA(Sec) + L-serine + ATP = L-seryl-tRNA(Sec) + AMP + diphosphate + H(+). Its pathway is aminoacyl-tRNA biosynthesis; selenocysteinyl-tRNA(Sec) biosynthesis; L-seryl-tRNA(Sec) from L-serine and tRNA(Sec): step 1/1. Functionally, catalyzes the attachment of serine to tRNA(Ser). Is also able to aminoacylate tRNA(Sec) with serine, to form the misacylated tRNA L-seryl-tRNA(Sec), which will be further converted into selenocysteinyl-tRNA(Sec). The sequence is that of Serine--tRNA ligase from Gluconacetobacter diazotrophicus (strain ATCC 49037 / DSM 5601 / CCUG 37298 / CIP 103539 / LMG 7603 / PAl5).